Reading from the N-terminus, the 154-residue chain is Endoribonuclease YbeY (154 aa).

Zn(2+)-binding residues include His-115, His-119, and His-125.

It belongs to the endoribonuclease YbeY family. Requires Zn(2+) as cofactor.

It is found in the cytoplasm. In terms of biological role, single strand-specific metallo-endoribonuclease involved in late-stage 70S ribosome quality control and in maturation of the 3' terminus of the 16S rRNA. The polypeptide is Endoribonuclease YbeY (Halorhodospira halophila (strain DSM 244 / SL1) (Ectothiorhodospira halophila (strain DSM 244 / SL1))).